The sequence spans 113 residues: Endoribonuclease SymE (113 aa).

The region spanning 29–74 (SRYPDYSRIPAITLKGQWLEAAGFATGTAVDVKVMEGCIVLTAQPP) is the SpoVT-AbrB domain.

The protein belongs to the SymE family.

It localises to the cytoplasm. Its function is as follows. Involved in the degradation and recycling of damaged RNA. It is itself a target for degradation by the ATP-dependent protease Lon. The sequence is that of Endoribonuclease SymE from Escherichia coli (strain K12 / MC4100 / BW2952).